A 301-amino-acid chain; its full sequence is MIYLHAIDPIAFSLGPVKVHWYGLMYLAGFGAAWCLGRQRIQAGRLLGVNIDGFSDLLFYAMMGVVLGGRVGYMLFYAFHDFLQEPLLLFRVWEGGMSFHGGLIGVLLAVAWWSRRQRMHMFDVVDFCAPLVPVGLGFGRLGNFIGGELWGKLTHNGWGVIFPRAPLSDVPAGQLAMQDVINFVQIQEHYAAGLLGHYARHPSQLYEAFLEGLVMFIVLWLFSRKPRPRYAVSGLFALLYGVFRFLVEFVRMPDNGVYVAFGWLTRGQILSLPLIVIGLFLFWLSCRSPVLQPVPAPEVAK.

A run of 4 helical transmembrane segments spans residues 10–30, 57–77, 92–112, and 119–139; these read IAFSLGPVKVHWYGLMYLAGF, LLFYAMMGVVLGGRVGYMLFY, VWEGGMSFHGGLIGVLLAVAW, and MHMFDVVDFCAPLVPVGLGFG. A 1,2-diacyl-sn-glycero-3-phospho-(1'-sn-glycerol) is bound at residue Arg140. The next 3 helical transmembrane spans lie at 202 to 222, 230 to 250, and 264 to 284; these read PSQLYEAFLEGLVMFIVLWLF, YAVSGLFALLYGVFRFLVEFV, and LTRGQILSLPLIVIGLFLFWL.

This sequence belongs to the Lgt family.

The protein localises to the cell inner membrane. The enzyme catalyses L-cysteinyl-[prolipoprotein] + a 1,2-diacyl-sn-glycero-3-phospho-(1'-sn-glycerol) = an S-1,2-diacyl-sn-glyceryl-L-cysteinyl-[prolipoprotein] + sn-glycerol 1-phosphate + H(+). It functions in the pathway protein modification; lipoprotein biosynthesis (diacylglyceryl transfer). Catalyzes the transfer of the diacylglyceryl group from phosphatidylglycerol to the sulfhydryl group of the N-terminal cysteine of a prolipoprotein, the first step in the formation of mature lipoproteins. The protein is Phosphatidylglycerol--prolipoprotein diacylglyceryl transferase of Xylella fastidiosa (strain M23).